The chain runs to 300 residues: GTPase Era (300 aa).

The region spanning 5-172 (HSGFVAIIGR…LTALTDALPV (168 aa)) is the Era-type G domain. A G1 region spans residues 13 to 20 (GRPNVGKS). 13-20 (GRPNVGKS) contacts GTP. The interval 39–43 (QTTRN) is G2. Positions 60 to 63 (DTPG) are G3. GTP is bound by residues 60-64 (DTPGI) and 122-125 (NKID). The interval 122 to 125 (NKID) is G4. The G5 stretch occupies residues 151–153 (ISA). One can recognise a KH type-2 domain in the interval 203–280 (TRDEVPHAVA…NLKLWVRVQK (78 aa)).

The protein belongs to the TRAFAC class TrmE-Era-EngA-EngB-Septin-like GTPase superfamily. Era GTPase family. In terms of assembly, monomer.

It localises to the cytoplasm. The protein resides in the cell membrane. Its function is as follows. An essential GTPase that binds both GDP and GTP, with rapid nucleotide exchange. Plays a role in 16S rRNA processing and 30S ribosomal subunit biogenesis and possibly also in cell cycle regulation and energy metabolism. This chain is GTPase Era, found in Lacticaseibacillus paracasei (strain ATCC 334 / BCRC 17002 / CCUG 31169 / CIP 107868 / KCTC 3260 / NRRL B-441) (Lactobacillus paracasei).